Here is a 121-residue protein sequence, read N- to C-terminus: Small ribosomal subunit protein uS13 (121 aa).

Residues 94–121 (GLPLRGQRTRTNARTRKGPRRAAQSLKK) form a disordered region.

Belongs to the universal ribosomal protein uS13 family. In terms of assembly, part of the 30S ribosomal subunit. Forms a loose heterodimer with protein S19. Forms two bridges to the 50S subunit in the 70S ribosome.

Its function is as follows. Located at the top of the head of the 30S subunit, it contacts several helices of the 16S rRNA. In the 70S ribosome it contacts the 23S rRNA (bridge B1a) and protein L5 of the 50S subunit (bridge B1b), connecting the 2 subunits; these bridges are implicated in subunit movement. Contacts the tRNAs in the A and P-sites. This Paraburkholderia phytofirmans (strain DSM 17436 / LMG 22146 / PsJN) (Burkholderia phytofirmans) protein is Small ribosomal subunit protein uS13.